A 446-amino-acid polypeptide reads, in one-letter code: Ribosomal protein uS12 methylthiotransferase RimO (446 aa).

An MTTase N-terminal domain is found at 4–119 (YKVGMVSLGC…IDKVIKEFIE (116 aa)). C13, C48, C82, C157, C161, and C164 together coordinate [4Fe-4S] cluster. The region spanning 143-373 (TTQKESAYIR…MLSQEKISND (231 aa)) is the Radical SAM core domain. Positions 376–442 (KLKVNKKYDI…DYDLIGVVED (67 aa)) constitute a TRAM domain.

It belongs to the methylthiotransferase family. RimO subfamily. [4Fe-4S] cluster is required as a cofactor.

It is found in the cytoplasm. It catalyses the reaction L-aspartate(89)-[ribosomal protein uS12]-hydrogen + (sulfur carrier)-SH + AH2 + 2 S-adenosyl-L-methionine = 3-methylsulfanyl-L-aspartate(89)-[ribosomal protein uS12]-hydrogen + (sulfur carrier)-H + 5'-deoxyadenosine + L-methionine + A + S-adenosyl-L-homocysteine + 2 H(+). Catalyzes the methylthiolation of an aspartic acid residue of ribosomal protein uS12. The sequence is that of Ribosomal protein uS12 methylthiotransferase RimO from Clostridium botulinum (strain Eklund 17B / Type B).